A 243-amino-acid polypeptide reads, in one-letter code: Aliphatic sulfonates import ATP-binding protein SsuB (243 aa).

The ABC transporter domain maps to 11–230 (ATVRGLRKSY…RTHPSFASYT (220 aa)). Position 43 to 50 (43 to 50 (GRSGSGKS)) interacts with ATP.

It belongs to the ABC transporter superfamily. Aliphatic sulfonates importer (TC 3.A.1.17.2) family. The complex is composed of two ATP-binding proteins (SsuB), two transmembrane proteins (SsuC) and a solute-binding protein (SsuA).

The protein resides in the cell membrane. It catalyses the reaction ATP + H2O + aliphatic sulfonate-[sulfonate-binding protein]Side 1 = ADP + phosphate + aliphatic sulfonateSide 2 + [sulfonate-binding protein]Side 1.. In terms of biological role, part of the ABC transporter complex SsuABC involved in aliphatic sulfonates import. Responsible for energy coupling to the transport system. Is also involved in taurine transport. Seems to not be involved in long chain aliphatic sulfonates transport (chain length of eight carbon atoms or more). The chain is Aliphatic sulfonates import ATP-binding protein SsuB from Corynebacterium glutamicum (strain ATCC 13032 / DSM 20300 / JCM 1318 / BCRC 11384 / CCUG 27702 / LMG 3730 / NBRC 12168 / NCIMB 10025 / NRRL B-2784 / 534).